A 484-amino-acid polypeptide reads, in one-letter code: L-carnitine dehydrogenase/betainyl-CoA thioesterase (484 aa).

An L-carnitine dehydrogenase region spans residues methionine 1–lysine 322. Glycine 7–glycine 12 serves as a coordination point for NAD(+). The segment at valine 323–alanine 484 is betainyl-CoA thioesterase.

In the N-terminal section; belongs to the 3-hydroxyacyl-CoA dehydrogenase family. L-carnitine dehydrogenase subfamily. The protein in the C-terminal section; belongs to the betainyl-CoA thioesterase family. Homodimer.

It localises to the cytoplasm. The enzyme catalyses carnitine + NAD(+) = 3-dehydrocarnitine + NADH + H(+). The catalysed reaction is N,N,N-trimethylglycyl-CoA + H2O = glycine betaine + CoA + H(+). Its pathway is amine and polyamine metabolism; carnitine metabolism. Its function is as follows. Multifunctional enzyme that catalyzes the NAD(+)-dependent oxidation of L-carnitine to 3-dehydrocarnitine and the cleavage of betainyl-CoA (N,N,N-trimethylglycyl-CoA) into glycine betaine and coenzyme A. The chain is L-carnitine dehydrogenase/betainyl-CoA thioesterase from Agrobacterium fabrum (strain C58 / ATCC 33970) (Agrobacterium tumefaciens (strain C58)).